A 238-amino-acid polypeptide reads, in one-letter code: MIFPAIDLLNGQSVRLYQGDYEKETTINPDPLKQAKQIESAGLKHLHLVDLDGAKEGKPVNLNVIQSLREQTNLFIELGGGIRTLEQVNQYLNIGINRVIIGSAALTHPELVRTAVAKYGSDKIVVGVDGRDEKVATQGWLENSDTSFDDIVEAMLSVGVSNFVVTDIARDGTLSGPNIELLSRLQNKFPKSNIIASGGIANIKNVTDLQASGIHDIIVGRALYDGDVTLAQLKEVDG.

Aspartate 7 serves as the catalytic Proton acceptor. Aspartate 129 serves as the catalytic Proton donor.

The protein belongs to the HisA/HisF family.

The protein localises to the cytoplasm. It carries out the reaction 1-(5-phospho-beta-D-ribosyl)-5-[(5-phospho-beta-D-ribosylamino)methylideneamino]imidazole-4-carboxamide = 5-[(5-phospho-1-deoxy-D-ribulos-1-ylimino)methylamino]-1-(5-phospho-beta-D-ribosyl)imidazole-4-carboxamide. Its pathway is amino-acid biosynthesis; L-histidine biosynthesis; L-histidine from 5-phospho-alpha-D-ribose 1-diphosphate: step 4/9. In Leuconostoc mesenteroides subsp. mesenteroides (strain ATCC 8293 / DSM 20343 / BCRC 11652 / CCM 1803 / JCM 6124 / NCDO 523 / NBRC 100496 / NCIMB 8023 / NCTC 12954 / NRRL B-1118 / 37Y), this protein is 1-(5-phosphoribosyl)-5-[(5-phosphoribosylamino)methylideneamino] imidazole-4-carboxamide isomerase.